The sequence spans 156 residues: MTKNIQVLFVCLGNICRSPMAEAVFRNEVEKAGLEARFDTIDSCGTGAWHVGNRPDPRTLEVLKKNGIHTKHLARKLSTSDFKNFDYIFAMDSSNLRNINRVKPQGSRAKVMLFGEYASPGVSKIVDDPYYGGSDGFGDCYIQLVDFSQNFLKSIA.

Cys-11 serves as the catalytic Nucleophile. The active site involves Arg-17. The active-site Proton donor is Asp-128.

It belongs to the low molecular weight phosphotyrosine protein phosphatase family.

Its subcellular location is the cytoplasm. It catalyses the reaction O-phospho-L-tyrosyl-[protein] + H2O = L-tyrosyl-[protein] + phosphate. The catalysed reaction is a phosphate monoester + H2O = an alcohol + phosphate. Functionally, may contribute to dephosphorylation of 'Tyr-15' of cdc2. This Schizosaccharomyces pombe (strain 972 / ATCC 24843) (Fission yeast) protein is Low molecular weight phosphotyrosine protein phosphatase (stp1).